A 347-amino-acid chain; its full sequence is Merozoite surface protein P12 (347 aa).

The signal sequence occupies residues 1-25 (MIKLSKKYCLGISFVLYILLSVCEG). 6-Cys domains are found at residues 27 to 172 (KNLT…IPSL) and 175 to 305 (KVKG…ISSS). Asparagine 28 is a glycosylation site (N-linked (GlcNAc...) asparagine). 3 disulfide bridges follow: cysteine 31/cysteine 53, cysteine 67/cysteine 138, and cysteine 81/cysteine 136. N-linked (GlcNAc...) asparagine glycans are attached at residues asparagine 147, asparagine 200, asparagine 228, asparagine 242, asparagine 265, and asparagine 322. 3 disulfides stabilise this stretch: cysteine 179-cysteine 211, cysteine 225-cysteine 286, and cysteine 236-cysteine 284. Asparagine 322 carries GPI-anchor amidated asparagine lipidation. A propeptide spans 323-347 (SSFLTLSSYCAFITFIITSFLSFIL) (removed in mature form).

In terms of assembly, heterodimer; heterodimerizes with PF41. May form an antiparallel heterodimer with PF41. Processed into a soluble form.

Its subcellular location is the cell surface. The protein resides in the cell membrane. The polypeptide is Merozoite surface protein P12 (PF12) (Plasmodium falciparum (isolate 3D7)).